A 100-amino-acid polypeptide reads, in one-letter code: Protein RADIALIS-like 1 (100 aa).

The region spanning 9–64 (QSSGSWTAKQNKAFEQALATYDQDTPNRWQNVAKVVGGKTTEEVKRHYELLVQDIN) is the SANT domain. The tract at residues 73-100 (FPNYRTSGGCTNGRLSQEEKRMRNMRLQ) is disordered. The span at 76–87 (YRTSGGCTNGRL) shows a compositional bias: polar residues.

Its subcellular location is the nucleus. In terms of biological role, probable transcription factor. This is Protein RADIALIS-like 1 (RL1) from Arabidopsis thaliana (Mouse-ear cress).